The primary structure comprises 299 residues: MLNEHGRRLLLGPTTQRRRLRQILDREDCVTMATIFDPVSARLAEQLGYEAGLMGGSLASYAVLGAPDLIVLTLTELAEQVHRCTRVSDVPLVVDGDHGYGNALSVMRTVHELDRAGAAAVTIEDTLLPRPYGSSGKPALVSFDEAVARVEAAVAARGDSDLLVLGRTSAATLNGIEDAVARFKAFEAAGVDAIFLPGPQQREQIDAISDAVKVPLLMAGAPEALCDPAYLATRRVKAWSAGHQTFSVALKALHDSMQLVRSGTLSLHLPGQASKQLLEQATGVPEYDEWTRQYLAGGA.

A substrate-binding site is contributed by S57. D95 is a binding site for Mg(2+). The substrate site is built by R167 and H243.

It belongs to the isocitrate lyase/PEP mutase superfamily. Oxaloacetate decarboxylase family. Homotetramer; dimer of dimers. Requires Mg(2+) as cofactor.

The catalysed reaction is oxaloacetate + H(+) = pyruvate + CO2. Its function is as follows. Catalyzes the decarboxylation of oxaloacetate into pyruvate. Seems to play a role in maintaining cellular concentrations of bicarbonate and pyruvate. The sequence is that of Oxaloacetate decarboxylase from Paraburkholderia xenovorans (strain LB400).